We begin with the raw amino-acid sequence, 484 residues long: Fumigaclavine B O-acetyltransferase ifgI (484 aa).

It belongs to the fumigaclavine B O-acetyltransferase family. As to quaternary structure, monomer.

It carries out the reaction fumigaclavine B + acetyl-CoA = fumigaclavine A + CoA. It participates in alkaloid biosynthesis; ergot alkaloid biosynthesis. Fumigaclavine B O-acetyltransferase; part of the gene cluster that mediates the biosynthesis of isofumigaclavines, fungal ergot alkaloids. The tryptophan dimethylallyltransferase ifgA catalyzes the first step of ergot alkaloid biosynthesis by condensing dimethylallyl diphosphate (DMAP) and tryptophan to form 4-dimethylallyl-L-tryptophan. The second step is catalyzed by the methyltransferase ifgB that methylates 4-dimethylallyl-L-tryptophan in the presence of S-adenosyl-L-methionine, resulting in the formation of N-methyl-dimethylallyl-L-tryptophan. The catalase ifgD and the FAD-dependent oxidoreductase ifgC then transform N-methyl-dimethylallyl-L-tryptophan to chanoclavine-I which is further oxidized by ifgE in the presence of NAD(+), resulting in the formation of chanoclavine-I aldehyde. The chanoclavine-I aldehyde reductases ifgG and/or fgaOx3 reduce chanoclavine-I aldehyde to dihydrochanoclavine-I aldehyde that spontaneously dehydrates to form 6,8-dimethyl-6,7-didehydroergoline. The festuclavine dehydrogenases ifgF1 and/or ifgF2 then catalyze the reduction of 6,8-dimethyl-6,7-didehydroergoline to form festuclavine. Hydrolysis of festuclavine by a yet undetermined cytochrome P450 monooxygenase (called ifgH) then leads to the formation of isofumigaclavine B which is in turn acetylated by ifgI to isofumigaclavine A. Penicillium roqueforti has interestingly at least two sets of genes for the consumption of chanoclavine-I aldehyde on three different loci, the OYEs ifgG/fgaOx3 and the festuclavine synthase homologs ifgF1/ifgF2. The reason for the duplication of these genes is unclear, probably to ensure the conversion of chanoclavine-I aldehyde by differential gene expression under various environmental conditions. The protein is Fumigaclavine B O-acetyltransferase ifgI of Penicillium roqueforti (strain FM164).